A 386-amino-acid chain; its full sequence is CUE domain-containing protein 1 (386 aa).

Over residues 1 to 10 (MTSLFRRSSS) the composition is skewed to low complexity. A disordered region spans residues 1 to 40 (MTSLFRRSSSGSGGGGTAGARGGGGGTAAPQELNNSRPAR). Residues 11–27 (GSGGGGTAGARGGGGGT) are compositionally biased toward gly residues. The 44-residue stretch at 46-89 (EFNQAMDDFKTMFPNMDYDIIECVLRANSGAVDATIDQLLQMNL) folds into the CUE domain. Disordered regions lie at residues 147-172 (LAPP…RYRN), 195-225 (SIQG…DQES), and 367-386 (DFRG…REGQ). Positions 199-209 (NAGGPKPGSGE) are enriched in gly residues.

The chain is CUE domain-containing protein 1 (CUEDC1) from Homo sapiens (Human).